A 160-amino-acid polypeptide reads, in one-letter code: MADSDVKKVTKGEKKTREAMKKLGLAPVSDIFRVTIKQKEGVLVVVAEPEVYASPSGETYVVFGDHSFDDIASRLQKAVPKANVDDIVKAAMPAPTAVKESEESEEIVAQAVDSFDYKGVNPKDVEVVMKETKASREKVVETLIATKNDLVSAVLELTTN.

The 66-residue stretch at 10–75 (TKGEKKTREA…HSFDDIASRL (66 aa)) folds into the NAC-A/B domain. Positions 120–159 (VNPKDVEVVMKETKASREKVVETLIATKNDLVSAVLELTT) constitute a UBA domain.

The protein belongs to the NAC-alpha family. As to quaternary structure, part of the nascent polypeptide-associated complex (NAC), consisting of nacA and nacB.

The protein resides in the cytoplasm. It is found in the nucleus. Functionally, component of the nascent polypeptide-associated complex (NAC), a dynamic component of the ribosomal exit tunnel, protecting the emerging polypeptides from interaction with other cytoplasmic proteins to ensure appropriate nascent protein targeting. The NAC complex also promotes mitochondrial protein import by enhancing productive ribosome interactions with the outer mitochondrial membrane and blocks the inappropriate interaction of ribosomes translating non-secretory nascent polypeptides with translocation sites in the membrane of the endoplasmic reticulum. May also be involved in transcription regulation. In Dictyostelium discoideum (Social amoeba), this protein is Nascent polypeptide-associated complex subunit alpha (nacA).